Reading from the N-terminus, the 343-residue chain is MGVPIGELIPRKEIELENLYGKKIAIDALNAIYQFLSTIRQRDGTPLMDSKGRITSHLSGLFYRTINLMEAGIKPVYVFDGKPPAFKKKELEKRREAREEAEIKWKEALAKGDIEEARKYAQRATKVNEMLIEDAKKLLQLMGIPIVQAPSEGEAQAAYMAGKGDVYASASQDYDSLLFGTPRLVRNLTITGKRKMPGKDIYVEIKPELIVLEEVLKELKITREKLIELAILVGTDYNPGGIKGIGPKKALEIVKYSKDPLAKFQRQSDVDLYAIKEFFLNPPTTDDYSLKWKEPDEEGIIRFLCDEHDFSEERVKNGLERLKKAIKAGKQSTLESWFIKKKP.

The tract at residues 1 to 98 is N-domain; that stretch reads MGVPIGELIP…KELEKRREAR (98 aa). D27, D80, E152, E154, D173, D175, and D236 together coordinate Mg(2+). An I-domain region spans residues 116-258; sequence EARKYAQRAT…KALEIVKYSK (143 aa). Residues 330 to 338 are interaction with PCNA; that stretch reads KQSTLESWF.

This sequence belongs to the XPG/RAD2 endonuclease family. FEN1 subfamily. As to quaternary structure, interacts with PCNA. PCNA stimulates the nuclease activity without altering cleavage specificity. It depends on Mg(2+) as a cofactor.

Its function is as follows. Structure-specific nuclease with 5'-flap endonuclease and 5'-3' exonuclease activities involved in DNA replication and repair. During DNA replication, cleaves the 5'-overhanging flap structure that is generated by displacement synthesis when DNA polymerase encounters the 5'-end of a downstream Okazaki fragment. Binds the unpaired 3'-DNA end and kinks the DNA to facilitate 5' cleavage specificity. Cleaves one nucleotide into the double-stranded DNA from the junction in flap DNA, leaving a nick for ligation. Also involved in the base excision repair (BER) pathway. Acts as a genome stabilization factor that prevents flaps from equilibrating into structures that lead to duplications and deletions. Also possesses 5'-3' exonuclease activity on nicked or gapped double-stranded DNA. The chain is Flap endonuclease 1 from Pyrococcus abyssi (strain GE5 / Orsay).